Consider the following 475-residue polypeptide: Deoxyguanosinetriphosphate triphosphohydrolase-like protein (475 aa).

Positions 118 to 272 (RLTHTLEVAQ…MDLSDDIAYS (155 aa)) constitute an HD domain.

The protein belongs to the dGTPase family. Type 2 subfamily.

This chain is Deoxyguanosinetriphosphate triphosphohydrolase-like protein (dgt), found in Bifidobacterium longum (strain NCC 2705).